Reading from the N-terminus, the 218-residue chain is GTP cyclohydrolase 1 (218 aa).

Zn(2+)-binding residues include Cys109, His112, and Cys180.

The protein belongs to the GTP cyclohydrolase I family. Toroid-shaped homodecamer, composed of two pentamers of five dimers.

The enzyme catalyses GTP + H2O = 7,8-dihydroneopterin 3'-triphosphate + formate + H(+). The protein operates within cofactor biosynthesis; 7,8-dihydroneopterin triphosphate biosynthesis; 7,8-dihydroneopterin triphosphate from GTP: step 1/1. This is GTP cyclohydrolase 1 from Actinobacillus pleuropneumoniae serotype 5b (strain L20).